A 151-amino-acid polypeptide reads, in one-letter code: Deoxyuridine 5'-triphosphate nucleotidohydrolase (151 aa).

Residues 70–72 (RSG), Asn83, 87–89 (LID), and Met97 contribute to the substrate site.

The protein belongs to the dUTPase family. Mg(2+) is required as a cofactor.

It catalyses the reaction dUTP + H2O = dUMP + diphosphate + H(+). It functions in the pathway pyrimidine metabolism; dUMP biosynthesis; dUMP from dCTP (dUTP route): step 2/2. Its function is as follows. This enzyme is involved in nucleotide metabolism: it produces dUMP, the immediate precursor of thymidine nucleotides and it decreases the intracellular concentration of dUTP so that uracil cannot be incorporated into DNA. This is Deoxyuridine 5'-triphosphate nucleotidohydrolase from Pseudomonas fluorescens (strain SBW25).